An 800-amino-acid chain; its full sequence is Probable replication endonuclease from prophage-like region (800 aa).

Active-site O-(5'-phospho-DNA)-tyrosine intermediate residues include Y503 and Y507.

This sequence belongs to the phage GPA family.

Possible endonuclease which induces a single-strand cut and initiates DNA replication. This is Probable replication endonuclease from prophage-like region from Salmonella paratyphi A (strain ATCC 9150 / SARB42).